A 256-amino-acid polypeptide reads, in one-letter code: Phosphonates import ATP-binding protein PhnC (256 aa).

The ABC transporter domain occupies 5–253; the sequence is LRITGLVKEY…MLKTIYGGES (249 aa). 38–45 is a binding site for ATP; the sequence is GPSGTGKS.

This sequence belongs to the ABC transporter superfamily. Phosphonates importer (TC 3.A.1.9.1) family. The complex is composed of two ATP-binding proteins (PhnC), two transmembrane proteins (PhnE) and a solute-binding protein (PhnD).

The protein resides in the cell inner membrane. The catalysed reaction is phosphonate(out) + ATP + H2O = phosphonate(in) + ADP + phosphate + H(+). Its function is as follows. Part of the ABC transporter complex PhnCDE involved in phosphonates import. Responsible for energy coupling to the transport system. In Bordetella parapertussis (strain 12822 / ATCC BAA-587 / NCTC 13253), this protein is Phosphonates import ATP-binding protein PhnC.